Reading from the N-terminus, the 994-residue chain is Alpha-mannosidase F (994 aa).

An N-terminal signal peptide occupies residues 1–20 (MKNFYYFILILLFFNEVCYS). Zn(2+) is bound by residues His35, Asp37, and Asp151. The active-site Nucleophile is Asp151. N-linked (GlcNAc...) asparagine glycans are attached at residues Asn247 and Asn381. His392 is a Zn(2+) binding site. Asn554, Asn712, and Asn932 each carry an N-linked (GlcNAc...) asparagine glycan.

Belongs to the glycosyl hydrolase 38 family. The cofactor is Zn(2+).

It is found in the secreted. It carries out the reaction Hydrolysis of terminal, non-reducing alpha-D-mannose residues in alpha-D-mannosides.. This is Alpha-mannosidase F (manF) from Dictyostelium discoideum (Social amoeba).